A 554-amino-acid chain; its full sequence is Rab GTPase-binding effector protein 2 (554 aa).

Positions 1-15 (MAAAPAALALDPQPQ) are enriched in low complexity. Disordered regions lie at residues 1-29 (MAAAPAALALDPQPQEEQKDASESSELSR), 167-250 (IQRR…ETAS), and 375-395 (EQLPSSALQGSEQQEDQDEAL). The stretch at 15–173 (QEEQKDASES…IQEIQRRPRQ (159 aa)) forms a coiled coil. Residues 16-29 (EEQKDASESSELSR) are compositionally biased toward basic and acidic residues. 4 positions are modified to phosphoserine: S176, S180, S187, and S191. Residues 274-512 (DSQWEQLQVE…LETSEQVQRD (239 aa)) adopt a coiled-coil conformation. A compositionally biased stretch (polar residues) spans 377–386 (LPSSALQGSE).

The protein belongs to the rabaptin family. As to quaternary structure, heterodimer with RABGEF1. The dimer binds RAB5A that has been activated by GTP-binding. Interacts with SDCCAG8; this interaction is important for ciliogenesis regulation. Interacts with RAB4A; this interaction may mediate VEGFR2 cell surface expression.

The protein localises to the cytoplasm. The protein resides in the early endosome. Its subcellular location is the cytoskeleton. It localises to the microtubule organizing center. It is found in the centrosome. The protein localises to the cilium basal body. Its function is as follows. Plays a role in membrane trafficking and in homotypic early endosome fusion. Participates in arteriogenesis by regulating vascular endothelial growth factor receptor 2/VEGFR2 cell surface expression and endosomal trafficking. By interacting with SDCCAG8, localizes to centrosomes and plays a critical role in ciliogenesis. This chain is Rab GTPase-binding effector protein 2 (Rabep2), found in Rattus norvegicus (Rat).